The following is a 238-amino-acid chain: Survival of motor neuron-related-splicing factor 30 (238 aa).

Positions 72–132 constitute a Tudor domain; it reads SWKVGDKCMA…KPVEEGRKAK (61 aa). Positions 142–160 match the Nuclear localization signal motif; the sequence is KKEMIAQQREYKKKKALKK. The residue at position 201 (serine 201) is a Phosphoserine. An N6-acetyllysine modification is found at lysine 219.

The protein belongs to the SMN family. In terms of assembly, associates with spliceosomes. Associates with U4/U5/U6 tri-snRNP and with U2 snRNP.

The protein resides in the nucleus speckle. It localises to the nucleus. It is found in the cajal body. In terms of biological role, involved in spliceosome assembly. In Bos taurus (Bovine), this protein is Survival of motor neuron-related-splicing factor 30 (SMNDC1).